We begin with the raw amino-acid sequence, 229 residues long: Large ribosomal subunit protein uL1 (229 aa).

The protein belongs to the universal ribosomal protein uL1 family. As to quaternary structure, part of the 50S ribosomal subunit.

Its function is as follows. Binds directly to 23S rRNA. The L1 stalk is quite mobile in the ribosome, and is involved in E site tRNA release. Protein L1 is also a translational repressor protein, it controls the translation of the L11 operon by binding to its mRNA. The protein is Large ribosomal subunit protein uL1 of Haemophilus influenzae (strain PittEE).